The primary structure comprises 641 residues: FACT complex subunit SSRP1-A (641 aa).

The interval 459–561 (TDDDAVDPHL…DPNAPKRAMT (103 aa)) is disordered. Positions 476-487 (GDEESDEEDEDF) are enriched in acidic residues. The segment covering 512-524 (GGEKEKLSKKEAS) has biased composition (basic and acidic residues). Positions 556–624 (PKRAMTPFMY…RYEKESAVYR (69 aa)) form a DNA-binding region, HMG box.

This sequence belongs to the SSRP1 family. In terms of assembly, component of the FACT complex, a stable heterodimer of SPT16 and SSRP1.

Its subcellular location is the nucleus. It is found in the chromosome. Functionally, component of the FACT complex, a general chromatin factor that acts to reorganize nucleosomes. The FACT complex is involved in multiple processes that require DNA as a template such as mRNA elongation, DNA replication and DNA repair. During transcription elongation the FACT complex acts as a histone chaperone that both destabilizes and restores nucleosomal structure. It facilitates the passage of RNA polymerase II and transcription by promoting the dissociation of one histone H2A-H2B dimer from the nucleosome, then subsequently promotes the reestablishment of the nucleosome following the passage of RNA polymerase II. Binds specifically to double-stranded DNA. This is FACT complex subunit SSRP1-A (SSRP1-A) from Oryza sativa subsp. japonica (Rice).